The sequence spans 977 residues: Macrophage colony-stimulating factor 1 receptor (977 aa).

An N-terminal signal peptide occupies residues 1–19 (MELGPPLVLLLATVWHGQG). Over 20–515 (APVIEPSGPE…QLPDESLFTP (496 aa)) the chain is Extracellular. Ig-like C2-type domains follow at residues 24–104 (EPSG…VKDP), 107–197 (SWNL…KVNR), 204–298 (QIKL…VVES), 299–397 (AYLN…LTLR), and 398–503 (YPPE…SLGQ). 3 disulfide bridges follow: C42-C84, C127-C177, and C224-C278. N-linked (GlcNAc...) asparagine glycans are attached at residues N45 and N73. Residues N302, N335, N389, N410, N449, N478, and N491 are each glycosylated (N-linked (GlcNAc...) asparagine). Cysteines 417 and 483 form a disulfide. The chain crosses the membrane as a helical span at residues 516 to 536 (VVVACMSVMSLLVLLLLLLLY). The Cytoplasmic segment spans residues 537–977 (KYKQKPKYQV…LLQPNNYQFC (441 aa)). A regulatory juxtamembrane domain region spans residues 540 to 572 (QKPKYQVRWKIIERYEGNSYTFIDPTQLPYNEK). A phosphotyrosine; by autocatalysis mark is found at Y544 and Y559. The region spanning 580 to 913 (LQFGKTLGAG…ICFLLQEQAR (334 aa)) is the Protein kinase domain. ATP is bound by residues 586-594 (LGAGAFGKV) and K614. Phosphotyrosine; by autocatalysis is present on residues Y697 and Y706. A Phosphoserine modification is found at S711. Y721 bears the Phosphotyrosine; by autocatalysis mark. Residue D776 is the Proton acceptor of the active site. The interval 794–816 (DFGLARDIMNDSNYVVKGNARLP) is activation loop. Residues Y807 and Y921 each carry the phosphotyrosine; by autocatalysis modification. The segment at 921–957 (YANLPSSGGSSGSDSGGGSSGGSSSEPEEESSSEHLA) is disordered. Residues 929-941 (GSSGSDSGGGSSG) are compositionally biased toward gly residues. Y974 carries the phosphotyrosine; by autocatalysis modification.

The protein belongs to the protein kinase superfamily. Tyr protein kinase family. CSF-1/PDGF receptor subfamily. As to quaternary structure, monomer. Homodimer. Interacts with CSF1 and IL34. Interaction with dimeric CSF1 or IL34 leads to receptor homodimerization. Interacts with INPPL1/SHIP2 and THOC5. Interacts (tyrosine phosphorylated) with PLCG2 (via SH2 domain). Interacts (tyrosine phosphorylated) with PIK3R1 (via SH2 domain). Interacts (tyrosine phosphorylated) with FYN, YES1 and SRC (via SH2 domain). Interacts (tyrosine phosphorylated) with CBL, GRB2 and SLA2. In terms of processing, autophosphorylated in response to CSF1 or IL34 binding. Phosphorylation at Tyr-559 is important for normal down-regulation of signaling by ubiquitination, internalization and degradation. Phosphorylation at Tyr-559 and Tyr-807 is important for interaction with SRC family members, including FYN, YES1 and SRC, and for subsequent activation of these protein kinases. Phosphorylation at Tyr-697 and Tyr-921 is important for interaction with GRB2. Phosphorylation at Tyr-721 is important for interaction with PIK3R1. Phosphorylation at Tyr-721 and Tyr-807 is important for interaction with PLCG2. Phosphorylation at Tyr-974 is important for interaction with CBL. Dephosphorylation by PTPN2 negatively regulates downstream signaling and macrophage differentiation. Post-translationally, ubiquitinated. Becomes rapidly polyubiquitinated after autophosphorylation, leading to its degradation. As to expression, widely expressed.

The protein localises to the cell membrane. The catalysed reaction is L-tyrosyl-[protein] + ATP = O-phospho-L-tyrosyl-[protein] + ADP + H(+). With respect to regulation, present in an inactive conformation in the absence of bound ligand. CSF1 or IL34 binding leads to dimerization and activation by autophosphorylation on tyrosine residues. Inhibited by imatinib/STI-571 (Gleevec), dasatinib, sunitinib/SU11248, lestaurtinib/CEP-701, midostaurin/PKC-412, Ki20227, linifanib/ABT-869, Axitinib/AG013736, sorafenib/BAY 43-9006 and GW2580. Functionally, tyrosine-protein kinase that acts as a cell-surface receptor for CSF1 and IL34 and plays an essential role in the regulation of survival, proliferation and differentiation of hematopoietic precursor cells, especially mononuclear phagocytes, such as macrophages and monocytes. Promotes the release of pro-inflammatory chemokines in response to IL34 and CSF1, and thereby plays an important role in innate immunity and in inflammatory processes. Plays an important role in the regulation of osteoclast proliferation and differentiation, the regulation of bone resorption, and is required for normal bone and tooth development. Required for normal male and female fertility, and for normal development of milk ducts and acinar structures in the mammary gland during pregnancy. Promotes reorganization of the actin cytoskeleton, regulates formation of membrane ruffles, cell adhesion and cell migration, and promotes cancer cell invasion. Activates several signaling pathways in response to ligand binding, including the ERK1/2 and the JNK pathway. Phosphorylates PIK3R1, PLCG2, GRB2, SLA2 and CBL. Activation of PLCG2 leads to the production of the cellular signaling molecules diacylglycerol and inositol 1,4,5-trisphosphate, that then lead to the activation of protein kinase C family members, especially PRKCD. Phosphorylation of PIK3R1, the regulatory subunit of phosphatidylinositol 3-kinase, leads to activation of the AKT1 signaling pathway. Activated CSF1R also mediates activation of the MAP kinases MAPK1/ERK2 and/or MAPK3/ERK1, and of the SRC family kinases SRC, FYN and YES1. Activated CSF1R transmits signals both via proteins that directly interact with phosphorylated tyrosine residues in its intracellular domain, or via adapter proteins, such as GRB2. Promotes activation of STAT family members STAT3, STAT5A and/or STAT5B. Promotes tyrosine phosphorylation of SHC1 and INPP5D/SHIP-1. Receptor signaling is down-regulated by protein phosphatases, such as INPP5D/SHIP-1, that dephosphorylate the receptor and its downstream effectors, and by rapid internalization of the activated receptor. In the central nervous system, may play a role in the development of microglia macrophages. In Mus musculus (Mouse), this protein is Macrophage colony-stimulating factor 1 receptor (Csf1r).